Consider the following 237-residue polypeptide: Ribonuclease PH (237 aa).

Residues Arg86 and 124–126 (GTR) each bind phosphate.

This sequence belongs to the RNase PH family. As to quaternary structure, homohexameric ring arranged as a trimer of dimers.

The enzyme catalyses tRNA(n+1) + phosphate = tRNA(n) + a ribonucleoside 5'-diphosphate. In terms of biological role, phosphorolytic 3'-5' exoribonuclease that plays an important role in tRNA 3'-end maturation. Removes nucleotide residues following the 3'-CCA terminus of tRNAs; can also add nucleotides to the ends of RNA molecules by using nucleoside diphosphates as substrates, but this may not be physiologically important. Probably plays a role in initiation of 16S rRNA degradation (leading to ribosome degradation) during starvation. The protein is Ribonuclease PH of Rhodopseudomonas palustris (strain ATCC BAA-98 / CGA009).